Reading from the N-terminus, the 573-residue chain is MKLNIFKSHGDSNTAEERPVPLEQVEAEDQQHENRFWLGLTAKEFRLMMLAGVGFFLDSYDLFIINLVTPIFEYLYWGGIEKGPNGKGHYPSGIRGLVNAASNIGNIFGQLMFGFMGDFFGRKFVYGKEMIIVIIATILLIAMPKSIHSPLSKMMWVFCWRWLLGVGIGGDYPMSAAITSERSKLNRRGTLISLIFAFQGFGTLAGAIVTIILLGCFEHPLNREGHYRKLEGVWRLQFGLALVPAIGVLIPRLMMEETQKFKNSQQLNSGDNRDPKTSLNFEDDELVKNPSVTKGHPEIHESSENYLSRSNTVENEPENIEKQFESVSAPANRSGFIQYFRQWHHFKHLLGTSVCWFLLDIAFYGVNLNQSVILKNIGFSSGTNEYRTLMKNAIGNLIIAVAGYVPGYWFNVFLVEILGRKWIQLQGFVITGLMFAILAGRWNEISTGGRFACFVIAQLFSNFGPNSTTFIYPAEVFPARVRGTAHGISAALGKCGAILASLLFNFLTSIIGYGNVMWIFCGCMWGGILFTLLLPETKGRDADEIDRVELFYGGDGKVECNSKWKSWYVNGIF.

A run of 6 helical transmembrane segments spans residues 48-68, 100-120, 124-144, 154-174, 194-214, and 230-250; these read MMLA…INLV, AASN…GDFF, FVYG…IAMP, MMWV…DYPM, LIFA…IILL, and LEGV…GVLI. The span at 261-270 shows a compositional bias: polar residues; it reads FKNSQQLNSG. Disordered stretches follow at residues 261 to 280 and 290 to 312; these read FKNS…TSLN and PSVT…RSNT. 6 helical membrane-spanning segments follow: residues 348–368, 397–417, 422–442, 451–471, 487–507, and 510–530; these read HLLG…GVNL, LIIA…LVEI, WIQL…AGRW, FACF…TTFI, GISA…FNFL, and IIGY…GILF.

The protein belongs to the major facilitator superfamily. Sugar transporter (TC 2.A.1.1) family.

The protein resides in the endoplasmic reticulum membrane. High-affinity transporter for external inorganic phosphate. The sequence is that of Putative inorganic phosphate transporter C1683.01 from Schizosaccharomyces pombe (strain 972 / ATCC 24843) (Fission yeast).